Consider the following 389-residue polypeptide: S-adenosylmethionine synthase (389 aa).

Histidine 19 lines the ATP pocket. Mg(2+) is bound at residue aspartate 21. Glutamate 47 contacts K(+). L-methionine is bound by residues glutamate 60 and glutamine 103. A flexible loop region spans residues 103–113 (QSVDIAQGVDR). Residues 168 to 170 (DGK), 234 to 235 (RF), aspartate 243, 249 to 250 (RK), alanine 266, and lysine 270 contribute to the ATP site. L-methionine is bound at residue aspartate 243. Residue lysine 274 participates in L-methionine binding.

The protein belongs to the AdoMet synthase family. In terms of assembly, homotetramer; dimer of dimers. Mg(2+) serves as cofactor. The cofactor is K(+).

The protein localises to the cytoplasm. The catalysed reaction is L-methionine + ATP + H2O = S-adenosyl-L-methionine + phosphate + diphosphate. It functions in the pathway amino-acid biosynthesis; S-adenosyl-L-methionine biosynthesis; S-adenosyl-L-methionine from L-methionine: step 1/1. Functionally, catalyzes the formation of S-adenosylmethionine (AdoMet) from methionine and ATP. The overall synthetic reaction is composed of two sequential steps, AdoMet formation and the subsequent tripolyphosphate hydrolysis which occurs prior to release of AdoMet from the enzyme. This chain is S-adenosylmethionine synthase, found in Maridesulfovibrio salexigens (strain ATCC 14822 / DSM 2638 / NCIMB 8403 / VKM B-1763) (Desulfovibrio salexigens).